The sequence spans 900 residues: MQSSIPSVSVSVASPAMETPTKASPDSKSPNSVGAIPSSSPLASSTKASTSTPFVENCSNLLCDLASIVEDSPPTLTNTSLSPHSFSLSDMESSMSNWLNPFAFDNTMNSAPPLFTSTNMGSPNSLENSTNPLLSNCGSPNSFQNETFTGPSLNEFDADDKIQRQMKILHSVDTIDPSTVQNYPSADMSNPEVKLKTEEIITPMDTTCKPEPSAKKIKLSPSSEDSCSIPETLPFSAPKSRGSLSPSETPDFVAGPGGKPKKTAHNMIEKRYRTNLNDRICELRDAVPSLRAAAALRCGNSLDDEDLGGLTPARKLNKGTILAKATEYIRHLEAKNKELQKTNKQLSDRLAFYEDPSMAPPSNDTRAVNSVNVVSSSDYSVHQSSRPNLTQRAFTSPTLNTMGRTALNGMVGLGLFNYFGNDSSQSVYGLFALPPFLMSPFTGTVLFNMLKIGVVLLGLFYLLHDNSLFKGFKGEKKSKVSTRSSMSPSSILFRKTVFEKYCLLDHSTSTISLFFGLLIFTLKSAYGYLTHRLSALYTSSENWVYSEQQLAEVRNMEKLLDAQLMGGDAKVDRLRLLMVFASSFSLPPSSHTCALQAMYCQLIFSNTSVPSAIVSKCVAFFWNAAKKQHSKSSVHAELRELPECTANLIENSHADDVFSPNMVERLWVLAKCTRDSAQMSDSIISSLSDVLVLSPLEVLASWYAADLLDALLMESLSRKVEISEIEEIISLCPKNSSIIRHALLAKLVLFPENTADSLNEVLAAYKNTLDLCSQDKRKQSSVLKINLSKLFTLHSCLSLALQRLGYGDVSKRMYQEIFVPDSDADITPLSFIISWTALNTFAPICTSPKENDVVEKMAMYVRTAIGTLKIQDLKLSRKLINSCIDIGSRLQEDLGYVSSA.

The span at 1-16 (MQSSIPSVSVSVASPA) shows a compositional bias: low complexity. Disordered stretches follow at residues 1 to 49 (MQSS…TKAS) and 206 to 263 (TTCK…PKKT). The nuclear form of sre1; complements deletions of sre1 or scp1 stretch occupies residues 1-440 (MQSSIPSVSV…FALPPFLMSP (440 aa)). At 1 to 442 (MQSSIPSVSV…LPPFLMSPFT (442 aa)) the chain is on the cytoplasmic side. Residues 21–32 (TKASPDSKSPNS) are compositionally biased toward polar residues. Low complexity predominate over residues 35-49 (AIPSSSPLASSTKAS). In terms of domain architecture, bHLH spans 260–332 (PKKTAHNMIE…AKATEYIRHL (73 aa)). The helical transmembrane segment at 443–463 (GTVLFNMLKIGVVLLGLFYLL) threads the bilayer. Over 464–509 (HDNSLFKGFKGEKKSKVSTRSSMSPSSILFRKTVFEKYCLLDHSTS) the chain is Lumenal. Residues 510 to 530 (TISLFFGLLIFTLKSAYGYLT) traverse the membrane as a helical segment. Residues 531-900 (HRLSALYTSS…QEDLGYVSSA (370 aa)) lie on the Cytoplasmic side of the membrane. A phosphoserine mark is found at Ser-898 and Ser-899.

In terms of assembly, forms a tight complex with scp1, composed of 4 copies of scp1 and 4 copies of sre1, which protects sre1 precursor from degradation by the proteasome. In terms of processing, in low oxygen or sterol conditions, undergoes proteolytic cleavage by rhomboid-type protease rbd2 and is released as soluble transcription factor from the membrane. Processed form is phosphorylated.

It is found in the endoplasmic reticulum membrane. It localises to the nucleus. Precursor of the transcription factor form (Processed sterol regulatory element-binding protein 1), which is embedded in the endoplasmic reticulum membrane. Low oxygen or sterol conditions promote processing of this form, releasing the transcription factor form that translocates into the nucleus and activates transcription of genes required for adaptation to anaerobic growth. In terms of biological role, transcriptional activator required for transcription of genes required for adaptation to anaerobic growth like those implicated in the nonrespiratory oxygen-consumptive biosynthetic pathways of sterol, heme, sphingolipid, and ubiquinone biosynthesis. May monitor oxygen levels through sterol synthesis steps which require oxygen. The protein is Sterol regulatory element-binding protein 1 of Schizosaccharomyces pombe (strain 972 / ATCC 24843) (Fission yeast).